Here is a 389-residue protein sequence, read N- to C-terminus: Geranylgeranyl pyrophosphate synthase A (389 aa).

Lys-99, Arg-102, and His-131 together coordinate isopentenyl diphosphate. Positions 138 and 142 each coordinate Mg(2+). Position 147 (Arg-147) interacts with dimethylallyl diphosphate. Isopentenyl diphosphate is bound at residue Arg-148.

This sequence belongs to the FPP/GGPP synthase family. Requires Mg(2+) as cofactor.

It localises to the cytoplasm. The enzyme catalyses isopentenyl diphosphate + (2E)-geranyl diphosphate = (2E,6E)-farnesyl diphosphate + diphosphate. It catalyses the reaction isopentenyl diphosphate + (2E,6E)-farnesyl diphosphate = (2E,6E,10E)-geranylgeranyl diphosphate + diphosphate. Its pathway is isoprenoid biosynthesis; farnesyl diphosphate biosynthesis; farnesyl diphosphate from geranyl diphosphate and isopentenyl diphosphate: step 1/1. It participates in isoprenoid biosynthesis; geranylgeranyl diphosphate biosynthesis; geranylgeranyl diphosphate from farnesyl diphosphate and isopentenyl diphosphate: step 1/1. Functionally, catalyzes the trans-addition of the 2 molecules of isopentenyl diphosphate (IPP) onto geranyl diphosphate (GDP) to form geranylgeranyl pyrophosphate (GGDP). Does not catalyze the conversion of dimethylallyl diphosphate (DMAPP). In Phomopsis amygdali (Fusicoccum amygdali), this protein is Geranylgeranyl pyrophosphate synthase A (GGS-A).